Here is a 1306-residue protein sequence, read N- to C-terminus: MDSLPRLTSVLTLLFSGLWHLGLTATNYNCDDPLASLLSPMAFSSSSDLTGTHSPAQLNWRVGTGGWSPADSNAQQWLQMDLGNRVEITAVATQGRYGSSDWVTSYSLMFSDTGRNWKQYKQEDSIWTFAGNMNADSVVHHKLLHSVRARFVRFVPLEWNPSGKIGMRVEVYGCSYKSDVADFDGRSSLLYRFNQKLMSTLKDVISLKFKSMQGDGVLFHGEGQRGDHITLELQKGRLALHLNLGDSKARLSSSLPSATLGSLLDDQHWHSVLIERVGKQVNFTVDKHTQHFRTKGETDALDIDYELSFGGIPVPGKPGTFLKKNFHGCIENLYYNGVNIIDLAKRRKHQIYTGNVTFSCSEPQIVPITFVNSSGSYLLLPGTPQIDGLSVSFQFRTWNKDGLLLSTELSEGSGTLLLSLEGGILRLVIQKMTERVAEILTGSNLNDGLWHSVSINARRNRITLTLDDEAAPPAPDSTWVQIYSGNSYYFGGCPDNLTDSQCLNPIKAFQGCMRLIFIDNQPKDLISVQQGSLGNFSDLHIDLCSIKDRCLPNYCEHGGSCSQSWTTFYCNCSDTSYTGATCHNSIYEQSCEVYRHQGNTAGFFYIDSDGSGPLGPLQVYCNITEDKIWTSVQHNNTELTRVRGANPEKPYAMALDYGGSMEQLEAVIDGSEHCEQEVAYHCRRSRLLNTPDGTPFTWWIGRSNERHPYWGGSPPGVQQCECGLDESCLDIQHFCNCDADKDEWTNDTGFLSFKDHLPVTQIVITDTDRSNSEAAWRIGPLRCYGDRRFWNAVSFYTEASYLHFPTFHAEFSADISFFFKTTALSGVFLENLGIKDFIRLEISSPSEITFAIDVGNGPVELVVQSPSLLNDNQWHYVRAERNLKETSLQVDNLPRSTRETSEEGHFRLQLNSQLFVGGTSSRQKGFLGCIRSLHLNGQKMDLEERAKVTSGVRPGCPGHCSSYGSICHNGGKCVEKHNGYLCDCTNSPYEGPFCKKEVSAVFEAGTSVTYMFQEPYPVTKNISLSSSAIYTDSAPSKENIALSFVTTQAPSLLLFINSSSQDFVVVLLCKNGSLQVRYHLNKEETHVFTIDADNFANRRMHHLKINREGRELTIQMDQQLRLSYNFSPEVEFRVIRSLTLGKVTENLGLDSEVAKANAMGFAGCMSSVQYNHIAPLKAALRHATVAPVTVHGTLTESSCGFMVDSDVNAVTTVHSSSDPFGKTDEREPLTNAVRSDSAVIGGVIAVVIFIIFCIIGIMTRFLYQHKQSHRTSQMKEKEYPENLDSSFRNEIDLQNTVSECKREYFI.

The first 24 residues, 1 to 24 (MDSLPRLTSVLTLLFSGLWHLGLT), serve as a signal peptide directing secretion. Residues 25-1237 (ATNYNCDDPL…PLTNAVRSDS (1213 aa)) lie on the Extracellular side of the membrane. An F5/8 type C domain is found at 30 to 174 (CDDPLASLLS…IGMRVEVYGC (145 aa)). A disulfide bond links Cys30 and Cys174. 2 consecutive Laminin G-like domains span residues 180 to 360 (VADF…TFSC) and 367 to 544 (PITF…IDLC). N-linked (GlcNAc...) asparagine glycosylation is found at Asn282, Asn355, and Asn496. A disulfide bridge links Cys329 with Cys360. Disulfide bonds link Cys512–Cys544, Cys550–Cys561, and Cys555–Cys570. In terms of domain architecture, EGF-like 1 spans 546–583 (IKDRCLPNYCEHGGSCSQSWTTFYCNCSDTSYTGATCH). A glycan (N-linked (GlcNAc...) asparagine) is linked at Asn571. The cysteines at positions 572 and 582 are disulfide-linked. A Fibrinogen C-terminal domain is found at 584-790 (NSIYEQSCEV…LRCYGDRRFW (207 aa)). Asn622 carries an N-linked (GlcNAc...) asparagine glycan. Residues 791–956 (NAVSFYTEAS…KVTSGVRPGC (166 aa)) form the Laminin G-like 3 domain. 5 disulfides stabilise this stretch: Cys929–Cys956, Cys960–Cys973, Cys967–Cys982, Cys984–Cys994, and Cys1164–Cys1199. The region spanning 957-995 (PGHCSSYGSICHNGGKCVEKHNGYLCDCTNSPYEGPFCK) is the EGF-like 2 domain. Positions 1013-1199 (QEPYPVTKNI…VHGTLTESSC (187 aa)) constitute a Laminin G-like 4 domain. Residues 1238–1258 (AVIGGVIAVVIFIIFCIIGIM) form a helical membrane-spanning segment. Residues 1259–1306 (TRFLYQHKQSHRTSQMKEKEYPENLDSSFRNEIDLQNTVSECKREYFI) are Cytoplasmic-facing.

The protein belongs to the neurexin family.

The protein localises to the membrane. Functionally, may play a role in the correct development and proper functioning of the peripheral and central nervous system and be involved in cell adhesion and intercellular communication. This Homo sapiens (Human) protein is Contactin-associated protein-like 5 (CNTNAP5).